A 131-amino-acid chain; its full sequence is Transcription antitermination protein NusB (131 aa).

This sequence belongs to the NusB family.

In terms of biological role, involved in transcription antitermination. Required for transcription of ribosomal RNA (rRNA) genes. Binds specifically to the boxA antiterminator sequence of the ribosomal RNA (rrn) operons. The chain is Transcription antitermination protein NusB from Bacillus subtilis (strain 168).